The primary structure comprises 847 residues: Alanine--tRNA ligase (847 aa).

Zn(2+) contacts are provided by His-554, His-558, Cys-656, and His-660.

This sequence belongs to the class-II aminoacyl-tRNA synthetase family. Zn(2+) serves as cofactor.

The protein localises to the cytoplasm. It carries out the reaction tRNA(Ala) + L-alanine + ATP = L-alanyl-tRNA(Ala) + AMP + diphosphate. Functionally, catalyzes the attachment of alanine to tRNA(Ala) in a two-step reaction: alanine is first activated by ATP to form Ala-AMP and then transferred to the acceptor end of tRNA(Ala). Also edits incorrectly charged Ser-tRNA(Ala) and Gly-tRNA(Ala) via its editing domain. The polypeptide is Alanine--tRNA ligase (Helicobacter acinonychis (strain Sheeba)).